Here is a 193-residue protein sequence, read N- to C-terminus: Acyl-homoserine-lactone synthase (193 aa).

Belongs to the autoinducer synthase family.

It carries out the reaction a fatty acyl-[ACP] + S-adenosyl-L-methionine = an N-acyl-L-homoserine lactone + S-methyl-5'-thioadenosine + holo-[ACP] + H(+). Functionally, required for the synthesis of OHHL (N-(3-oxohexanoyl)-L-homoserine lactone) also known as VAI or N-(beta-ketocaproyl)homoserine lactone or 3-oxo-N-(tetrahydro-2-oxo-3-furanyl)-hexanamide, an autoinducer molecule which binds to LuxR and thus acts in bioluminescence regulation. This is Acyl-homoserine-lactone synthase (luxI) from Aliivibrio fischeri (strain ATCC 700601 / ES114) (Vibrio fischeri).